A 204-amino-acid polypeptide reads, in one-letter code: High frequency lysogenization protein HflD homolog (204 aa).

Belongs to the HflD family.

The protein localises to the cytoplasm. It is found in the cell inner membrane. This chain is High frequency lysogenization protein HflD homolog, found in Ruthia magnifica subsp. Calyptogena magnifica.